The sequence spans 414 residues: MKYMVLFSGLLFSNVLVASELPDFLDMNDIENAKFQCLGESPQYSAQDQKYIDILWEETLTYLRAYAEALTNDQNSGCLNSDIAMVDSTEGGQHMCVMDRRDMKLMVKNVYQVINNADAAKKCFGAREDVSWIYSPGGELESRSEVAQWINRTTFKQFFDKQVTDKEVQQYGKSFTENFYKMVTGSEIKMPAVFPHDISANALPNLWASAGWFPMYAEESERNDKNFNNIRGGYAYAEIFGHWGLLRIDEINGEKVGAEIGMTVQAVNSLYPFHNHAVSEMYYNMRTPACANQFRTMAIREDSPLIRTVKEDSKVRRVQFDEGQHNSQTMWLSGSNAQDSLTYFHQNTIHAFDIDGQCEASPEERAIVSVWARSNAHDTRNDYGTTLLCESAKHPGTPAKRGEVIQCDLTKVKW.

The N-terminal stretch at 1 to 18 is a signal peptide; sequence MKYMVLFSGLLFSNVLVA.

It belongs to the DMSP lyase DddY family.

The protein localises to the periplasm. The enzyme catalyses S,S-dimethyl-beta-propiothetin = acrylate + dimethyl sulfide + H(+). Its function is as follows. Catalyzes the cleavage of dimethylsulfoniopropionate (DMSP) into dimethyl sulfide (DMS) and acrylate. This chain is Dimethylsulfoniopropionate lyase DddY, found in Shewanella woodyi (strain ATCC 51908 / MS32).